The primary structure comprises 593 residues: AT-rich interactive domain-containing protein 3A (593 aa).

The tract at residues 14–222 (QQRARQELEA…PQLQPPDHGD (209 aa)) is disordered. Over residues 41-53 (AAPDEDREPESAR) the composition is skewed to basic and acidic residues. Over residues 54-87 (MQRAQMAALAAMRAAAAGLGHPASPGGSEDGPPG) the composition is skewed to low complexity. 3 positions are modified to phosphoserine: Ser-77, Ser-81, and Ser-88. Residue Thr-98 is modified to Phosphothreonine. Phosphoserine is present on residues Ser-101 and Ser-119. A compositionally biased stretch (basic and acidic residues) spans 104–127 (RGREGPGEEHFEDMASDEDMKPKW). Residues 119–156 (SDEDMKPKWEEEEMEEDLGEDEEEEEEDYEDEEEEEDE) form an acidic region. The span at 128-158 (EEEEMEEDLGEDEEEEEEDYEDEEEEEDEEG) shows a compositional bias: acidic residues. The 93-residue stretch at 238-330 (DPKRKEFLDD…YLYPYECEKR (93 aa)) folds into the ARID domain. Ser-353 and Ser-362 each carry phosphoserine. Glycyl lysine isopeptide (Lys-Gly) (interchain with G-Cter in SUMO2) cross-links involve residues Lys-398, Lys-399, Lys-452, and Lys-462. The 98-residue stretch at 444-541 (AALEQLREKL…GVLFAQPPAP (98 aa)) folds into the REKLES domain. The important for nuclear localization stretch occupies residues 445 to 488 (ALEQLREKLESAEPPEKKMALVADEQQRLMQRALQQNFLAMAAQ). The homodimerization stretch occupies residues 490-513 (PMSIRINSQASESRQDSAVNLTGT). Disordered stretches follow at residues 497 to 516 (SQAS…TNGS) and 539 to 593 (PAPT…NSLP). Positions 537 to 557 (QPPAPTPTSAPNKGGGGGGGS) are important for cytoplasmic localization. Positions 549-576 (KGGGGGGGSSSNAGGRGGNTGTSGGQAG) are enriched in gly residues. Over residues 580–593 (LSTPSTSTSNNSLP) the composition is skewed to low complexity.

Homodimer. Heterodimer with ARID3B. Interacts with E2F1. Interacts with GTF2I and BTK. In terms of tissue distribution, widely expressed, with highest expression in skeletal muscle, thalamus, and colon.

Its subcellular location is the nucleus. The protein resides in the cytoplasm. Its function is as follows. Transcription factor which may be involved in the control of cell cycle progression by the RB1/E2F1 pathway and in B-cell differentiation. The chain is AT-rich interactive domain-containing protein 3A (ARID3A) from Homo sapiens (Human).